The primary structure comprises 236 residues: Factor V activator RVV-V alpha (236 aa).

The 227-residue stretch at 1–227 (VVGGDECNIN…YNNWIQNIIA (227 aa)) folds into the Peptidase S1 domain. 6 disulfide bridges follow: Cys7-Cys141, Cys28-Cys44, Cys76-Cys234, Cys120-Cys188, Cys152-Cys167, and Cys178-Cys203. Active-site charge relay system residues include His43 and Asp88. Ser182 (charge relay system) is an active-site residue. N-linked (GlcNAc...) asparagine glycosylation is present at Asn229.

It belongs to the peptidase S1 family. Snake venom subfamily. As to quaternary structure, monomer. As to expression, expressed by the venom gland.

It localises to the secreted. The catalysed reaction is Fully activates human clotting factor V by a single cleavage at the 1545-Trp-Tyr-Leu-Arg-|-Ser-Asn-Asn-Gly-1552 bond. Cattle, but not rabbit, factor V is cleaved, and no other proteins of the clotting system are attacked. Esterase activity is observed on Bz-Arg-OEt and Tos-Arg-OMe, and amidase activity on Phe-pipecolyl-Arg-NHPhNO2.. With respect to regulation, inhibited by D-Phe-Pro-Arg-chloromethyl ketone (FPRCK) (97%), PMSF (76%), and benzamidine (50%). Is not inhibited by BPTI, antithrombin and EDTA. Venom serine protease that activates factor V (F5) in a calcium-independent manner. It cleaves the Arg(1545)-Ser(1546) linkage in the human factor V molecule. Induces the coagulation of mammalian plasma. This Daboia siamensis (Eastern Russel's viper) protein is Factor V activator RVV-V alpha.